The following is a 250-amino-acid chain: Acidic endochitinase (250 aa).

At Q1 the chain carries Pyrrolidone carboxylic acid. The region spanning 1–36 (QNCQCDTTIYCCSQHGYCGNSYDYCGPGCQAGPCWD) is the Chitin-binding type-1 domain. Intrachain disulfides connect C3–C12, C5–C18, C11–C25, C29–C34, C66–C115, C128–C136, and C218–C250. E110 acts as the Proton donor in catalysis.

Belongs to the glycosyl hydrolase 19 family. Chitinase class I subfamily.

The enzyme catalyses Random endo-hydrolysis of N-acetyl-beta-D-glucosaminide (1-&gt;4)-beta-linkages in chitin and chitodextrins.. Defense against chitin-containing fungal pathogens. The protein is Acidic endochitinase of Dioscorea japonica (Japanese yam).